Reading from the N-terminus, the 71-residue chain is Small ribosomal subunit protein bS21 (71 aa).

It belongs to the bacterial ribosomal protein bS21 family.

The protein is Small ribosomal subunit protein bS21 of Buchnera aphidicola subsp. Schizaphis graminum (strain Sg).